A 372-amino-acid chain; its full sequence is Glutamate 5-kinase (372 aa).

Residue K14 participates in ATP binding. 3 residues coordinate substrate: S54, D141, and N153. An ATP-binding site is contributed by 173–174 (TD). The PUA domain maps to 280–358 (AGRIVLDQGA…TDILSILGFV (79 aa)).

Belongs to the glutamate 5-kinase family.

Its subcellular location is the cytoplasm. It catalyses the reaction L-glutamate + ATP = L-glutamyl 5-phosphate + ADP. It participates in amino-acid biosynthesis; L-proline biosynthesis; L-glutamate 5-semialdehyde from L-glutamate: step 1/2. Functionally, catalyzes the transfer of a phosphate group to glutamate to form L-glutamate 5-phosphate. This chain is Glutamate 5-kinase, found in Herminiimonas arsenicoxydans.